Here is a 214-residue protein sequence, read N- to C-terminus: Pyridoxine/pyridoxamine 5'-phosphate oxidase (214 aa).

Residues 9-12 (RREY) and Lys-67 contribute to the substrate site. Residues 62–67 (RTVLLK), 77–78 (YS), Arg-83, Lys-84, and Gln-106 each bind FMN. Residues Tyr-124, Arg-128, and Ser-132 each coordinate substrate. FMN-binding positions include 141–142 (QS) and Trp-186. Position 192–194 (192–194 (RLH)) interacts with substrate. Residue Arg-196 participates in FMN binding.

It belongs to the pyridoxamine 5'-phosphate oxidase family. As to quaternary structure, homodimer. FMN is required as a cofactor.

It catalyses the reaction pyridoxamine 5'-phosphate + O2 + H2O = pyridoxal 5'-phosphate + H2O2 + NH4(+). The enzyme catalyses pyridoxine 5'-phosphate + O2 = pyridoxal 5'-phosphate + H2O2. The protein operates within cofactor metabolism; pyridoxal 5'-phosphate salvage; pyridoxal 5'-phosphate from pyridoxamine 5'-phosphate: step 1/1. It functions in the pathway cofactor metabolism; pyridoxal 5'-phosphate salvage; pyridoxal 5'-phosphate from pyridoxine 5'-phosphate: step 1/1. Functionally, catalyzes the oxidation of either pyridoxine 5'-phosphate (PNP) or pyridoxamine 5'-phosphate (PMP) into pyridoxal 5'-phosphate (PLP). The polypeptide is Pyridoxine/pyridoxamine 5'-phosphate oxidase (Porphyromonas gingivalis (strain ATCC BAA-308 / W83)).